The chain runs to 464 residues: Argininosuccinate lyase (464 aa).

Belongs to the lyase 1 family. Argininosuccinate lyase subfamily.

It is found in the cytoplasm. It carries out the reaction 2-(N(omega)-L-arginino)succinate = fumarate + L-arginine. It functions in the pathway amino-acid biosynthesis; L-arginine biosynthesis; L-arginine from L-ornithine and carbamoyl phosphate: step 3/3. The polypeptide is Argininosuccinate lyase (Pseudomonas aeruginosa (strain ATCC 15692 / DSM 22644 / CIP 104116 / JCM 14847 / LMG 12228 / 1C / PRS 101 / PAO1)).